A 391-amino-acid chain; its full sequence is Ammonium transporter Amt1 (391 aa).

A run of 10 helical transmembrane segments spans residues 12 to 32, 51 to 71, 88 to 108, 112 to 132, 152 to 172, 192 to 212, 223 to 243, 261 to 281, 305 to 325, and 338 to 358; these read VFFF…FIAL, LDLA…SYGF, AWWM…TGGV, IKIL…YPIV, AGSG…AYVL, IPIA…FNIG, LASV…GGAL, VAVC…VGLL, IGPV…IPFL, and GQII…LIIY.

This sequence belongs to the ammonia transporter channel (TC 1.A.11.2) family. Homotrimer. Interacts and forms a complex with GlnK1.

The protein localises to the cell membrane. Activity is regulated by the nitrogen regulatory protein GlnK1 via direct interaction. Formation of the GlnK1/Amt1 complex is decreased in the presence of Mg-ATP or 2-oxoglutarate. The presence of both effectors abolishes the formation of the complex. In terms of biological role, involved in the uptake of ammonium/ammonia (NH(4)(+)/NH(3)). Transport is electrogenic. This chain is Ammonium transporter Amt1, found in Methanocaldococcus jannaschii (strain ATCC 43067 / DSM 2661 / JAL-1 / JCM 10045 / NBRC 100440) (Methanococcus jannaschii).